A 441-amino-acid polypeptide reads, in one-letter code: S-adenosylmethionine synthase 1 (441 aa).

Mg(2+) is bound at residue glutamate 9. Position 15 (histidine 15) interacts with ATP. Residue glutamate 43 coordinates K(+). Residues glutamate 56 and glutamine 99 each contribute to the L-methionine site. Residues 167–169 (DGK), 235–238 (SGRF), aspartate 246, 252–253 (RK), alanine 269, lysine 273, and lysine 277 each bind ATP. L-methionine is bound at residue aspartate 246. Lysine 277 provides a ligand contact to L-methionine.

It belongs to the AdoMet synthase family. Homotetramer. The cofactor is Mn(2+). Requires Mg(2+) as cofactor. It depends on Co(2+) as a cofactor. K(+) is required as a cofactor.

The protein localises to the cytoplasm. The enzyme catalyses L-methionine + ATP + H2O = S-adenosyl-L-methionine + phosphate + diphosphate. Its pathway is amino-acid biosynthesis; S-adenosyl-L-methionine biosynthesis; S-adenosyl-L-methionine from L-methionine: step 1/1. Catalyzes the formation of S-adenosylmethionine from methionine and ATP. The reaction comprises two steps that are both catalyzed by the same enzyme: formation of S-adenosylmethionine (AdoMet) and triphosphate, and subsequent hydrolysis of the triphosphate. In Daucus carota (Wild carrot), this protein is S-adenosylmethionine synthase 1 (SAMS1).